A 651-amino-acid polypeptide reads, in one-letter code: Probable replication restart protein PriA (651 aa).

Zn(2+) contacts are provided by C371, C374, C380, C383, C399, C402, C411, and C414.

This sequence belongs to the helicase family. PriA subfamily. In terms of assembly, component of the replication restart primosome. Zn(2+) serves as cofactor.

In terms of biological role, initiates the restart of stalled replication forks, which reloads the replicative helicase on sites other than the origin of replication. Recognizes and binds to abandoned replication forks and remodels them to uncover a helicase loading site. Promotes assembly of the primosome at these replication forks. This Mycobacterium leprae (strain TN) protein is Probable replication restart protein PriA.